The primary structure comprises 370 residues: Dihydroorotate dehydrogenase (quinone) (370 aa).

FMN contacts are provided by residues 67–71 and Thr-91; that span reads AGFDK. Lys-71 is a substrate binding site. 116-120 contacts substrate; sequence NRMGF. FMN is bound by residues Asn-146 and Asn-179. Position 179 (Asn-179) interacts with substrate. Ser-182 serves as the catalytic Nucleophile. Asn-184 contributes to the substrate binding site. Residues Lys-222 and Thr-250 each coordinate FMN. 251–252 contributes to the substrate binding site; that stretch reads NT. FMN is bound by residues Gly-276, Gly-305, and 326–327; that span reads YS.

Belongs to the dihydroorotate dehydrogenase family. Type 2 subfamily. Monomer. It depends on FMN as a cofactor.

The protein resides in the cell membrane. The catalysed reaction is (S)-dihydroorotate + a quinone = orotate + a quinol. It functions in the pathway pyrimidine metabolism; UMP biosynthesis via de novo pathway; orotate from (S)-dihydroorotate (quinone route): step 1/1. Functionally, catalyzes the conversion of dihydroorotate to orotate with quinone as electron acceptor. The chain is Dihydroorotate dehydrogenase (quinone) from Streptomyces griseus subsp. griseus (strain JCM 4626 / CBS 651.72 / NBRC 13350 / KCC S-0626 / ISP 5235).